The primary structure comprises 445 residues: Phosphoglucosamine mutase (445 aa).

Ser-102 functions as the Phosphoserine intermediate in the catalytic mechanism. Ser-102, Asp-241, Asp-243, and Asp-245 together coordinate Mg(2+). The residue at position 102 (Ser-102) is a Phosphoserine.

This sequence belongs to the phosphohexose mutase family. Mg(2+) serves as cofactor. Activated by phosphorylation.

The enzyme catalyses alpha-D-glucosamine 1-phosphate = D-glucosamine 6-phosphate. Catalyzes the conversion of glucosamine-6-phosphate to glucosamine-1-phosphate. The polypeptide is Phosphoglucosamine mutase (Shewanella sp. (strain ANA-3)).